The primary structure comprises 166 residues: Crossover junction endodeoxyribonuclease RuvC (166 aa).

Residues D7, E67, and D139 contribute to the active site. The Mg(2+) site is built by D7, E67, and D139.

This sequence belongs to the RuvC family. As to quaternary structure, homodimer which binds Holliday junction (HJ) DNA. The HJ becomes 2-fold symmetrical on binding to RuvC with unstacked arms; it has a different conformation from HJ DNA in complex with RuvA. In the full resolvosome a probable DNA-RuvA(4)-RuvB(12)-RuvC(2) complex forms which resolves the HJ. Mg(2+) is required as a cofactor.

The protein resides in the cytoplasm. It carries out the reaction Endonucleolytic cleavage at a junction such as a reciprocal single-stranded crossover between two homologous DNA duplexes (Holliday junction).. Functionally, the RuvA-RuvB-RuvC complex processes Holliday junction (HJ) DNA during genetic recombination and DNA repair. Endonuclease that resolves HJ intermediates. Cleaves cruciform DNA by making single-stranded nicks across the HJ at symmetrical positions within the homologous arms, yielding a 5'-phosphate and a 3'-hydroxyl group; requires a central core of homology in the junction. The consensus cleavage sequence is 5'-(A/T)TT(C/G)-3'. Cleavage occurs on the 3'-side of the TT dinucleotide at the point of strand exchange. HJ branch migration catalyzed by RuvA-RuvB allows RuvC to scan DNA until it finds its consensus sequence, where it cleaves and resolves the cruciform DNA. The polypeptide is Crossover junction endodeoxyribonuclease RuvC (Paramagnetospirillum magneticum (strain ATCC 700264 / AMB-1) (Magnetospirillum magneticum)).